The chain runs to 139 residues: Peptide methionine sulfoxide reductase MsrB (139 aa).

In terms of domain architecture, MsrB spans 8-130 (DREWQRELSP…NSASLQLKTQ (123 aa)). Zn(2+)-binding residues include cysteine 47, cysteine 50, cysteine 96, and cysteine 99. Residue cysteine 119 is the Nucleophile of the active site.

This sequence belongs to the MsrB Met sulfoxide reductase family. It depends on Zn(2+) as a cofactor.

It carries out the reaction L-methionyl-[protein] + [thioredoxin]-disulfide + H2O = L-methionyl-(R)-S-oxide-[protein] + [thioredoxin]-dithiol. This is Peptide methionine sulfoxide reductase MsrB from Acinetobacter baumannii (strain SDF).